The primary structure comprises 469 residues: Glutamate--tRNA ligase (469 aa).

The 'HIGH' region signature appears at 10-20 (PSPTGYLHVGG). Cys99, Cys101, Cys126, and Asp128 together coordinate Zn(2+). The short motif at 238–242 (RLSKR) is the 'KMSKS' region element. Lys241 is an ATP binding site.

The protein belongs to the class-I aminoacyl-tRNA synthetase family. Glutamate--tRNA ligase type 1 subfamily. In terms of assembly, monomer. Zn(2+) is required as a cofactor.

The protein localises to the cytoplasm. It carries out the reaction tRNA(Glu) + L-glutamate + ATP = L-glutamyl-tRNA(Glu) + AMP + diphosphate. Its function is as follows. Catalyzes the attachment of glutamate to tRNA(Glu) in a two-step reaction: glutamate is first activated by ATP to form Glu-AMP and then transferred to the acceptor end of tRNA(Glu). In Pelobacter propionicus (strain DSM 2379 / NBRC 103807 / OttBd1), this protein is Glutamate--tRNA ligase.